The sequence spans 822 residues: Putative endoplasmic reticulum metallopeptidase 1 (822 aa).

Residues 1–14 are Cytoplasmic-facing; sequence MVLVCASSSKCKRN. The chain crosses the membrane as a helical span at residues 15–35; the sequence is TFLQLAMVLFAVVMARIALYF. At 36–365 the chain is on the lumenal side; it reads HNHLDEPLVD…FNSLFFMYSK (330 aa). Asn146 carries an N-linked (GlcNAc...) asparagine glycan. Positions 161 and 173 each coordinate Zn(2+). Glu207 acts as the Proton acceptor in catalysis. Positions 208 and 234 each coordinate Zn(2+). An N-linked (GlcNAc...) asparagine glycan is attached at Asn291. Residue His307 coordinates Zn(2+). Residues 366–384 traverse the membrane as a helical segment; sequence LTSKILNTLVGGLGILLTL. Over 385–392 the chain is Cytoplasmic; sequence RGSEGSFT. Residues 393-413 traverse the membrane as a helical segment; sequence VALIAQVISIAGIFVIPNIWA. Over 414–431 the chain is Lumenal; sequence YILGNVLDCGMSWFRNEY. A helical transmembrane segment spans residues 432–452; it reads WPLFIYLPAIFASLFFTESLF. The Cytoplasmic portion of the chain corresponds to 453 to 463; it reads KRSEHLALRAT. A helical membrane pass occupies residues 464 to 484; sequence IFIFSLLTFIPLPSAYLFTII. Asp485 is a topological domain (lumenal). A helical transmembrane segment spans residues 486-506; it reads FFMVFALFLNDKILAKPGTVH. Residues 507-514 lie on the Cytoplasmic side of the membrane; the sequence is PLTYFIGS. Residues 515-535 traverse the membrane as a helical segment; it reads IGAMTVGFESAINLLEIFVPL. Topologically, residues 536-547 are lumenal; it reads TGRIGTDKVADN. The helical transmembrane segment at 548-568 threads the bilayer; it reads VVATVCVCGFNIYFPLMSPWI. Over 569–575 the chain is Cytoplasmic; it reads QRFRSRC. Residues 576 to 596 form a helical membrane-spanning segment; it reads CFRLGLLFSIFVVGFSSFILA. Topologically, residues 597–822 are lumenal; the sequence is KQDTYYDSLH…GVVSGNFKLE (226 aa). Residues Asn617, Asn682, Asn706, and Asn758 are each glycosylated (N-linked (GlcNAc...) asparagine).

It belongs to the peptidase M28 family. M28B subfamily. Zn(2+) is required as a cofactor.

Its subcellular location is the endoplasmic reticulum membrane. The polypeptide is Putative endoplasmic reticulum metallopeptidase 1 (Schizosaccharomyces pombe (strain 972 / ATCC 24843) (Fission yeast)).